A 232-amino-acid polypeptide reads, in one-letter code: 6-hydroxymethyl-7,8-dihydropterin pyrophosphokinase (232 aa).

Belongs to the archaeal 6-HMPDK family. Requires Mg(2+) as cofactor.

The catalysed reaction is 6-hydroxymethyl-7,8-dihydropterin + ATP = (7,8-dihydropterin-6-yl)methyl diphosphate + AMP + H(+). Its pathway is cofactor biosynthesis; 5,6,7,8-tetrahydromethanopterin biosynthesis. Its function is as follows. Catalyzes the transfer of diphosphate from ATP to 6-hydroxymethyl-7,8-dihydropterin (6-HMD), leading to 6-hydroxymethyl-7,8-dihydropterin diphosphate (6-HMDP). The sequence is that of 6-hydroxymethyl-7,8-dihydropterin pyrophosphokinase from Methanothermobacter thermautotrophicus (strain ATCC 29096 / DSM 1053 / JCM 10044 / NBRC 100330 / Delta H) (Methanobacterium thermoautotrophicum).